A 977-amino-acid chain; its full sequence is Synaptopodin 2-like protein (977 aa).

The 83-residue stretch at E6–A88 folds into the PDZ domain. Disordered regions lie at residues G91 to R226, A317 to W352, and A364 to L677. Phosphoserine occurs at positions 108 and 111. Positions P109–L123 are enriched in pro residues. Position 141 is a phosphothreonine (T141). Phosphoserine is present on residues S143, S178, and S180. Residues E183–P192 show a composition bias toward pro residues. Residues Q194 to S203 show a composition bias toward polar residues. Positions E216 to R226 are enriched in low complexity. S345, S350, S374, S381, and S384 each carry phosphoserine. R386 is subject to Omega-N-methylarginine. Positions P436 to F450 are enriched in pro residues. Residues R466, R469, and R479 each carry the omega-N-methylarginine modification. Positions L510–V525 are enriched in polar residues. Composition is skewed to low complexity over residues P530 to T545 and S572 to E595. The span at A596 to P607 shows a compositional bias: pro residues. 2 positions are modified to phosphoserine: S670 and S678. The tract at residues T697–S802 is disordered. Residues K704–P730 show a composition bias toward pro residues. Phosphothreonine occurs at positions 705 and 713. R757 carries the omega-N-methylarginine modification. Residues G781–P796 show a composition bias toward pro residues. A phosphoserine mark is found at S788 and S790. Position 792 is a phosphothreonine (T792). An omega-N-methylarginine mark is found at R806, R826, and R889. Residue S891 is modified to Phosphoserine. Phosphothreonine is present on residues T892 and T898. R910 carries the omega-N-methylarginine modification. At R921 the chain carries Asymmetric dimethylarginine; alternate. The residue at position 921 (R921) is an Omega-N-methylarginine; alternate. Residues T922–G950 are disordered. The span at V929–A938 shows a compositional bias: pro residues. Omega-N-methylarginine is present on residues R955 and R957.

Belongs to the synaptopodin family.

The protein resides in the cytoplasm. The protein localises to the cytoskeleton. Its function is as follows. Actin-associated protein that may play a role in modulating actin-based shape. The sequence is that of Synaptopodin 2-like protein (SYNPO2L) from Homo sapiens (Human).